We begin with the raw amino-acid sequence, 254 residues long: 5'-methylthioadenosine/S-adenosylhomocysteine nucleosidase (254 aa).

Position 1 is an N-acetylmethionine (Met-1). Catalysis depends on Glu-25, which acts as the Proton acceptor. S-methyl-5'-thioadenosine is bound by residues Thr-103 and 186–189; that span reads KDME. Residues Lys-186 and Asp-212 each contribute to the adenine site. Asp-212 acts as the Proton donor in catalysis.

Belongs to the PNP/UDP phosphorylase family. MtnN subfamily. As to quaternary structure, homodimer.

The enzyme catalyses S-methyl-5'-thioadenosine + H2O = 5-(methylsulfanyl)-D-ribose + adenine. The catalysed reaction is S-adenosyl-L-homocysteine + H2O = S-(5-deoxy-D-ribos-5-yl)-L-homocysteine + adenine. It carries out the reaction 5'-deoxyadenosine + H2O = 5-deoxy-D-ribose + adenine. Its pathway is amino-acid biosynthesis; L-methionine biosynthesis via salvage pathway; S-methyl-5-thio-alpha-D-ribose 1-phosphate from S-methyl-5'-thioadenosine (hydrolase route): step 1/2. In terms of biological role, enzyme of the methionine cycle that catalyzes the irreversible cleavage of the glycosidic bond in 5'-methylthioadenosine (MTA) and S-adenosylhomocysteine (SAH/AdoHcy) to a lesser extent, to adenine and the corresponding thioribose, 5'-methylthioribose and S-ribosylhomocysteine, respectively. Contributes to the maintenance of AdoMet homeostasis and is required to sustain high rates of ethylene synthesis. The polypeptide is 5'-methylthioadenosine/S-adenosylhomocysteine nucleosidase (MTN2) (Arabidopsis thaliana (Mouse-ear cress)).